Reading from the N-terminus, the 444-residue chain is MPCSSPACPACPAAGPAPVTLTRMQAWPFPQLPKLPGQGRDLRVLDTAHGGVRTLDLGPTVRLYACGITPYDATHLGHAFTYLTYDLVQRVLRDAGHEVRYVQNVTDVDDPLLERATRDGIDWRDLARREIDLFRADMTALRILPPDHYVGVVEAVGLIVDMVSQLVERGAAYSVDGDLYFSVAAAPDFGQVAHLDPAQMLVSCAEHGGDPGRPGKKDPLDPLLWRAERPGEPSWPSPFGPGRPGWHVECSAIARHYLGATIDIQGGGSDLAFPHHECSAAHAEVANGARPFARAYVHTALVSLDGHKMSKSRGNLEFVSRLLARGADPAAIRLALLQHHHTVEWEWTAAAMPAAAERLDRWRAAVALPSGPDFRPVLAEVRDRLADDLDAPGALAAVDAWAAAALAAGSGGSGEADDQAPATVRDTVDSLLGVDLGPVLPRGT.

C66 is a Zn(2+) binding site. Residues 66-69 (CGIT), T81, and 104-106 (NVT) each bind L-cysteinyl-5'-AMP. The 'HIGH' region signature appears at 68 to 78 (ITPYDATHLGH). The short motif at 206 to 211 (EHGGDP) is the 'ERGGDP' region element. W246 is a binding site for L-cysteinyl-5'-AMP. Zn(2+) is bound at residue C250. An L-cysteinyl-5'-AMP-binding site is contributed by 268–270 (GSD). H275 serves as a coordination point for Zn(2+). V302 provides a ligand contact to L-cysteinyl-5'-AMP. Positions 308 to 312 (KMSKS) match the 'KMSKS' region motif.

Belongs to the class-I aminoacyl-tRNA synthetase family. MshC subfamily. In terms of assembly, monomer. Requires Zn(2+) as cofactor.

The enzyme catalyses 1D-myo-inositol 2-amino-2-deoxy-alpha-D-glucopyranoside + L-cysteine + ATP = 1D-myo-inositol 2-(L-cysteinylamino)-2-deoxy-alpha-D-glucopyranoside + AMP + diphosphate + H(+). In terms of biological role, catalyzes the ATP-dependent condensation of GlcN-Ins and L-cysteine to form L-Cys-GlcN-Ins. The chain is L-cysteine:1D-myo-inositol 2-amino-2-deoxy-alpha-D-glucopyranoside ligase from Parafrankia sp. (strain EAN1pec).